The sequence spans 219 residues: Adenylate kinase (219 aa).

ATP is bound at residue 10-15 (GAGKGT). The tract at residues 30–59 (STGDMLRVAVKVGTPLGIEAKKIMDSGGLV) is NMP. AMP is bound by residues Thr-31, Arg-36, 57–59 (GLV), 85–88 (GFPR), and Gln-92. The tract at residues 122-159 (GRRTHLKSGRTYHITYNQPKVEGIDDITGEKLVQRSDD) is LID. Residues Arg-123 and 132–133 (TY) contribute to the ATP site. Positions 156 and 167 each coordinate AMP. Gly-202 is a binding site for ATP.

The protein belongs to the adenylate kinase family. In terms of assembly, monomer.

It is found in the cytoplasm. It carries out the reaction AMP + ATP = 2 ADP. It participates in purine metabolism; AMP biosynthesis via salvage pathway; AMP from ADP: step 1/1. Its function is as follows. Catalyzes the reversible transfer of the terminal phosphate group between ATP and AMP. Plays an important role in cellular energy homeostasis and in adenine nucleotide metabolism. This Vesicomyosocius okutanii subsp. Calyptogena okutanii (strain HA) protein is Adenylate kinase.